The sequence spans 497 residues: Ankyrin repeat domain-containing protein 53 (497 aa).

Basic residues predominate over residues 1–10 (MRRPSRRRSK). The disordered stretch occupies residues 1 to 65 (MRRPSRRRSK…VSSPNSESSQ (65 aa)). Residues 12–27 (STPPRSHTTPRRTGPS) show a composition bias toward low complexity. Basic and acidic residues predominate over residues 28 to 39 (DSRRRPGTKEQP). ANK repeat units lie at residues 110–140 (KGFT…PVDL), 144–177 (KGQT…AINS), and 181–210 (NGST…NVHA). Positions 239-264 (WKHDKKVLAQEMEKLRTLKEKLTILE) form a coiled coil.

As to quaternary structure, interacts with PSRC1; recruited by PSRC1 to the spindle during mitosis. In terms of processing, phosphorylated during mitosis.

The protein resides in the cytoplasm. The protein localises to the cytoskeleton. Its subcellular location is the spindle. It is found in the spindle pole. Its function is as follows. Required for normal progression through mitosis. Involved in chromosome alignment and cytokinesis via regulation of microtubules polymerization. The sequence is that of Ankyrin repeat domain-containing protein 53 (Ankrd53) from Mus musculus (Mouse).